The following is a 75-amino-acid chain: Alpha-elapitoxin-Bc2c (75 aa).

Positions 1-2 (YT) are cleaved as a signal peptide. 5 cysteine pairs are disulfide-bonded: C5/C24, C17/C45, C30/C34, C49/C60, and C61/C66.

It belongs to the three-finger toxin family. Long-chain subfamily. Type II alpha-neurotoxin sub-subfamily. Monomer in solution, homodimer in crystal state. As to expression, expressed by the venom gland.

It localises to the secreted. Binds to muscular and neuronal nicotinic acetylcholine receptor (nAChR) and inhibits acetylcholine from binding to the receptor, thereby impairing neuromuscular and neuronal transmission. Blocks muscle type nAChR. Also binds with high affinity to alpha-7/CHRNA7 nAChRs. In addition, shows a weak inhibition of neuronal alpha-3-beta-2/CHRNA3-CHRNB2 nAChR. Selectively binds to alpha-1-delta subunit interface of the mouse muscle nicotinic acetylcholine receptor, with a 10-fold higher affinity for the adult than for the fetal receptors. In vivo, when intraperitoneally injected into mice, causes flaccid paralysis and respiratory distress, followed by death within 2-4 hours. The chain is Alpha-elapitoxin-Bc2c from Bungarus candidus (Malayan krait).